The sequence spans 342 residues: Probable endoglucanase (342 aa).

A signal peptide spans 1 to 20 (MSVMAAMGGAQVLSSTGAFA). Catalysis depends on glutamate 57, which acts as the Proton donor. Aspartate 114 functions as the Nucleophile in the catalytic mechanism.

It belongs to the glycosyl hydrolase 8 (cellulase D) family.

The protein localises to the secreted. It carries out the reaction Endohydrolysis of (1-&gt;4)-beta-D-glucosidic linkages in cellulose, lichenin and cereal beta-D-glucans.. Enzyme capable of hydrolyzing carboxy-methyl-cellulose (CMC). This chain is Probable endoglucanase (cmcAX), found in Novacetimonas hansenii (Komagataeibacter hansenii).